A 115-amino-acid chain; its full sequence is Large ribosomal subunit protein bL19 (115 aa).

The protein belongs to the bacterial ribosomal protein bL19 family.

Functionally, this protein is located at the 30S-50S ribosomal subunit interface and may play a role in the structure and function of the aminoacyl-tRNA binding site. The sequence is that of Large ribosomal subunit protein bL19 from Sodalis glossinidius (strain morsitans).